We begin with the raw amino-acid sequence, 763 residues long: Cyclin-F (763 aa).

The short motif at 19–27 (KRRVKRRPR) is the Nuclear localization signal 1 element. The region spanning 28–75 (VLTLLSLPEDVLLYVLECLPAVDILSMREVHPHLRSLVDSHSSVWARA) is the F-box domain. The Cyclin N-terminal domain maps to 299-411 (INKTSIFTTQ…EIISALEGKI (113 aa)). Short sequence motifs (d box) lie at residues 316–319 (RYIL) and 355–358 (RAKL). Disordered stretches follow at residues 574-600 (GSKT…TAEL) and 677-763 (KLEN…SDEL). Positions 575–581 (SKTKRRR) match the Nuclear localization signal 2 motif. The segment covering 580 to 590 (RREDSIQEDRG) has biased composition (basic and acidic residues). Residues 589 to 747 (RGSFVTTPTA…LFKASRRQVK (159 aa)) form a PEST region. The segment covering 692–710 (SSGYSSVSSGGSPTSSSSP) has biased composition (low complexity). Positions 741-751 (ASRRQVKRKNQ) are enriched in basic residues.

This sequence belongs to the cyclin family. Cyclin AB subfamily. As to quaternary structure, component of the SCF(CCNF) complex.

The protein resides in the nucleus. It localises to the cytoplasm. The protein localises to the perinuclear region. Its subcellular location is the cytoskeleton. It is found in the microtubule organizing center. The protein resides in the centrosome. It localises to the centriole. Its function is as follows. Substrate recognition component of the SCF(CCNF) E3 ubiquitin-protein ligase complex which mediates the ubiquitination and subsequent proteasomal degradation of target proteins. The SCF(CCNF) E3 ubiquitin-protein ligase complex is an integral component of the ubiquitin proteasome system (UPS) and links proteasome degradation to the cell cycle. Mediates the substrate recognition and the proteasomal degradation of various target proteins during G2 phase involved in the regulation of cell cycle progression and in the maintenance of genome stability. This chain is Cyclin-F (ccnf), found in Xenopus tropicalis (Western clawed frog).